The chain runs to 458 residues: Bifunctional protein GlmU (458 aa).

The interval 1 to 230 (MSLPTYSKLN…EWQVAGINSK (230 aa)) is pyrophosphorylase. UDP-N-acetyl-alpha-D-glucosamine-binding positions include 14–17 (LAAG), K28, Q79, and 84–85 (GT). D108 serves as a coordination point for Mg(2+). Residues G141, E155, N170, and N228 each contribute to the UDP-N-acetyl-alpha-D-glucosamine site. Mg(2+) is bound at residue N228. The interval 231–251 (QDLAALERVYQGRYAARLLAK) is linker. Residues 252–458 (GVTLADPSRI…NWKRPEKVKK (207 aa)) form an N-acetyltransferase region. UDP-N-acetyl-alpha-D-glucosamine contacts are provided by R334 and K352. The active-site Proton acceptor is H364. Positions 367 and 378 each coordinate UDP-N-acetyl-alpha-D-glucosamine. Residues A381, 387 to 388 (NY), S406, A424, and R441 contribute to the acetyl-CoA site.

It in the N-terminal section; belongs to the N-acetylglucosamine-1-phosphate uridyltransferase family. This sequence in the C-terminal section; belongs to the transferase hexapeptide repeat family. In terms of assembly, homotrimer. Mg(2+) is required as a cofactor.

The protein resides in the cytoplasm. It carries out the reaction alpha-D-glucosamine 1-phosphate + acetyl-CoA = N-acetyl-alpha-D-glucosamine 1-phosphate + CoA + H(+). The enzyme catalyses N-acetyl-alpha-D-glucosamine 1-phosphate + UTP + H(+) = UDP-N-acetyl-alpha-D-glucosamine + diphosphate. It functions in the pathway nucleotide-sugar biosynthesis; UDP-N-acetyl-alpha-D-glucosamine biosynthesis; N-acetyl-alpha-D-glucosamine 1-phosphate from alpha-D-glucosamine 6-phosphate (route II): step 2/2. It participates in nucleotide-sugar biosynthesis; UDP-N-acetyl-alpha-D-glucosamine biosynthesis; UDP-N-acetyl-alpha-D-glucosamine from N-acetyl-alpha-D-glucosamine 1-phosphate: step 1/1. Its pathway is bacterial outer membrane biogenesis; LPS lipid A biosynthesis. Catalyzes the last two sequential reactions in the de novo biosynthetic pathway for UDP-N-acetylglucosamine (UDP-GlcNAc). The C-terminal domain catalyzes the transfer of acetyl group from acetyl coenzyme A to glucosamine-1-phosphate (GlcN-1-P) to produce N-acetylglucosamine-1-phosphate (GlcNAc-1-P), which is converted into UDP-GlcNAc by the transfer of uridine 5-monophosphate (from uridine 5-triphosphate), a reaction catalyzed by the N-terminal domain. The polypeptide is Bifunctional protein GlmU (Methylobacillus flagellatus (strain ATCC 51484 / DSM 6875 / VKM B-1610 / KT)).